We begin with the raw amino-acid sequence, 121 residues long: Flagellar protein FliT (121 aa).

Residues 1–50 (MNHAPHLYFAWQQLVEKSQLMLRLATEEQWDELIASEMAYVNAVQEIAHL) form a required for homodimerization region. Residues 60-98 (MQEQLRPMLRLILDNESKVKQLLQIRMDELAKLVGQSSV) are fliD binding.

This sequence belongs to the FliT family. Homodimer. Interacts with FliD and FlhC.

The protein resides in the cytoplasm. It localises to the cytosol. In terms of biological role, dual-function protein that regulates the transcription of class 2 flagellar operons and that also acts as an export chaperone for the filament-capping protein FliD. As a transcriptional regulator, acts as an anti-FlhDC factor; it directly binds FlhC, thus inhibiting the binding of the FlhC/FlhD complex to class 2 promoters, resulting in decreased expression of class 2 flagellar operons. As a chaperone, effects FliD transition to the membrane by preventing its premature polymerization, and by directing it to the export apparatus. The sequence is that of Flagellar protein FliT from Escherichia coli O8 (strain IAI1).